We begin with the raw amino-acid sequence, 129 residues long: Small ribosomal subunit protein uS11 (129 aa).

Belongs to the universal ribosomal protein uS11 family. In terms of assembly, part of the 30S ribosomal subunit. Interacts with proteins S7 and S18. Binds to IF-3.

In terms of biological role, located on the platform of the 30S subunit, it bridges several disparate RNA helices of the 16S rRNA. Forms part of the Shine-Dalgarno cleft in the 70S ribosome. The chain is Small ribosomal subunit protein uS11 from Salmonella newport (strain SL254).